The chain runs to 448 residues: Delta(14)-sterol reductase ERG24 (448 aa).

7 consecutive transmembrane segments (helical) span residues 18–38 (ISGA…FYLL), 75–95 (CWSA…LLPG), 108–128 (VLNY…LLLA), 157–177 (IIIC…ISFI), 251–271 (VTDS…DGVL), 279–299 (MIDI…LAWV), and 318–338 (NLGW…FYIF). Residues K345, R349, L368, W373, and 380 to 381 (NY) contribute to the NADP(+) site. A helical membrane pass occupies residues 394–414 (PTGFQTPLTYFYVIYFASLLI). NADP(+) is bound by residues D420, 424–428 (CRAKY), and Y435.

It belongs to the ERG4/ERG24 family.

It is found in the endoplasmic reticulum membrane. The catalysed reaction is 4,4-dimethyl-5alpha-cholesta-8,24-dien-3beta-ol + NADP(+) = 4,4-dimethyl-5alpha-cholesta-8,14,24-trien-3beta-ol + NADPH + H(+). It functions in the pathway steroid biosynthesis; zymosterol biosynthesis; zymosterol from lanosterol: step 2/6. Its function is as follows. C-14 sterol reductase; part of the third module of ergosterol biosynthesis pathway that includes the late steps of the pathway. ERG24 reduces the C14=C15 double bond of 4,4-dimethyl-cholesta-8,14,24-trienol to produce 4,4-dimethyl-cholesta-8,24-dienol. The third module or late pathway involves the ergosterol synthesis itself through consecutive reactions that mainly occur in the endoplasmic reticulum (ER) membrane. Firstly, the squalene synthase ERG9 catalyzes the condensation of 2 farnesyl pyrophosphate moieties to form squalene, which is the precursor of all steroids. Squalene synthase is crucial for balancing the incorporation of farnesyl diphosphate (FPP) into sterol and nonsterol isoprene synthesis. Secondly, the squalene epoxidase ERG1 catalyzes the stereospecific oxidation of squalene to (S)-2,3-epoxysqualene, which is considered to be a rate-limiting enzyme in steroid biosynthesis. Then, the lanosterol synthase ERG7 catalyzes the cyclization of (S)-2,3 oxidosqualene to lanosterol, a reaction that forms the sterol core. In the next steps, lanosterol is transformed to zymosterol through a complex process involving various demethylation, reduction and desaturation reactions. The lanosterol 14-alpha-demethylase ERG11 (also known as CYP51) catalyzes C14-demethylation of lanosterol to produce 4,4'-dimethyl cholesta-8,14,24-triene-3-beta-ol, which is critical for ergosterol biosynthesis. The C-14 reductase ERG24 reduces the C14=C15 double bond of 4,4-dimethyl-cholesta-8,14,24-trienol to produce 4,4-dimethyl-cholesta-8,24-dienol. 4,4-dimethyl-cholesta-8,24-dienol is substrate of the C-4 demethylation complex ERG25-ERG26-ERG27 in which ERG25 catalyzes the three-step monooxygenation required for the demethylation of 4,4-dimethyl and 4alpha-methylsterols, ERG26 catalyzes the oxidative decarboxylation that results in a reduction of the 3-beta-hydroxy group at the C-3 carbon to an oxo group, and ERG27 is responsible for the reduction of the keto group on the C-3. ERG28 has a role as a scaffold to help anchor ERG25, ERG26 and ERG27 to the endoplasmic reticulum and ERG29 regulates the activity of the iron-containing C4-methylsterol oxidase ERG25. Then, the sterol 24-C-methyltransferase ERG6 catalyzes the methyl transfer from S-adenosyl-methionine to the C-24 of zymosterol to form fecosterol. The C-8 sterol isomerase ERG2 catalyzes the reaction which results in unsaturation at C-7 in the B ring of sterols and thus converts fecosterol to episterol. The sterol-C5-desaturase ERG3 then catalyzes the introduction of a C-5 double bond in the B ring to produce 5-dehydroepisterol. The C-22 sterol desaturase ERG5 further converts 5-dehydroepisterol into ergosta-5,7,22,24(28)-tetraen-3beta-ol by forming the C-22(23) double bond in the sterol side chain. Finally, ergosta-5,7,22,24(28)-tetraen-3beta-ol is substrate of the C-24(28) sterol reductase ERG4 to produce ergosterol. The polypeptide is Delta(14)-sterol reductase ERG24 (Candida albicans (strain SC5314 / ATCC MYA-2876) (Yeast)).